Consider the following 166-residue polypeptide: Lipoprotein signal peptidase (166 aa).

3 helical membrane-spanning segments follow: residues 12 to 32 (WLWL…LILQ), 70 to 90 (WFFA…MYRS), and 102 to 122 (ALII…GFVV). Catalysis depends on residues Asp123 and Asp141. Residues 137 to 157 (FNLADSAICIGAALIVLEGFL) traverse the membrane as a helical segment.

This sequence belongs to the peptidase A8 family.

Its subcellular location is the cell inner membrane. It carries out the reaction Release of signal peptides from bacterial membrane prolipoproteins. Hydrolyzes -Xaa-Yaa-Zaa-|-(S,diacylglyceryl)Cys-, in which Xaa is hydrophobic (preferably Leu), and Yaa (Ala or Ser) and Zaa (Gly or Ala) have small, neutral side chains.. Its pathway is protein modification; lipoprotein biosynthesis (signal peptide cleavage). This protein specifically catalyzes the removal of signal peptides from prolipoproteins. The polypeptide is Lipoprotein signal peptidase (Salmonella choleraesuis (strain SC-B67)).